The chain runs to 2332 residues: Genome polyprotein (2332 aa).

The Peptidase C28 domain maps to 1–201; sequence MNTTNCFIAL…WKTQVQKKLK (201 aa). The Cytoplasmic segment spans residues 1-1480; sequence MNTTNCFIAL…SFVKRAFKRL (1480 aa). Catalysis depends on for leader protease activity residues C51, H148, and D163. Disordered regions lie at residues 199–218 and 237–264; these read KLKGAGQSSPATGSQNQSGN and TQLGDNTISGGSNEGSTDTTSTHTTNTQ. Residue G202 is the site of N-myristoyl glycine; by host attachment. 2 stretches are compositionally biased toward polar residues: residues 204 to 218 and 237 to 251; these read GQSSPATGSQNQSGN and TQLGDNTISGGSNEG. A compositionally biased stretch (low complexity) spans 252-264; sequence STDTTSTHTTNTQ. The tract at residues 789–797 is antigenic epitope; the sequence is ALLRAATYY. A Cell attachment site motif is present at residues 867-870; it reads RSGD. The region spanning 1189–1353 is the SF3 helicase domain; the sequence is NVHIANLCKV…DGYKINNKLD (165 aa). Position 1217–1224 (1217–1224) interacts with ATP; sequence GKSGQGKS. Residues 1481-1501 lie within the membrane without spanning it; sequence KENFEIVALCLTLLANIVIMI. The Cytoplasmic segment spans residues 1502 to 2332; sequence RETRKRQKMV…RWVNAVCGDA (831 aa). Composition is skewed to basic and acidic residues over residues 1529 to 1538 and 1549 to 1563; these read KTLDEAEKNP and FRERSLTGQKVRDDV. A disordered region spans residues 1529 to 1588; that stretch reads KTLDEAEKNPLETSGASTVGFRERSLTGQKVRDDVSSEPAQPAEDQPQAEGPYSGPLERQ. Y1581, Y1604, and Y1628 each carry O-(5'-phospho-RNA)-tyrosine. Residues 1652–1848 form the Peptidase C3 domain; that stretch reads APPTDLQKMV…YCSCVSRSML (197 aa). The active-site For protease 3C activity; Proton donor/acceptor is the H1695. Catalysis depends on for protease 3C activity residues D1733 and C1812. Residues 1878 to 1886 carry the Nuclear localization signal motif; it reads MRKTKLAPT. The 119-residue stretch at 2096 to 2214 folds into the RdRp catalytic domain; that stretch reads RNVWDVDYSA…ASDYDLDFEA (119 aa). D2200 serves as the catalytic For RdRp activity.

It belongs to the picornaviruses polyprotein family. In terms of assembly, interacts with host ISG15. Interacts (via R-G-D motif) with host ITGAV/ITGB6. Interacts with host MAVS; this interaction inhibits binding of host TRAF3 to MAVS, thereby suppressing interferon-mediated responses. As to quaternary structure, forms homooligomers. In terms of assembly, homohexamer. Interacts with host VIM. Interacts with host BECN1. Interacts with host DCTN3. As to quaternary structure, interacts with RNA-dependent RNA polymerase; this interaction allows 3B-1 to binds 2 polymerases and act as a primer. It also allows the recruitment of the RNA-dependent RNA polymerase to host membranes. In terms of assembly, interacts with RNA-dependent RNA polymerase; this interaction allows 3B-2 to act as a primer. Interacts with RNA-dependent RNA polymerase; this interaction allows 3B-3 to act as a primer. As to quaternary structure, interacts with 3B-1; this interaction allows 3B-1 to binds 2 polymerases and act as a primer. It also allows the recruitment of the RNA-dependent RNA polymerase to host membranes. Interacts with 3B-2; this interaction allows 3B-2 to act as a primer. Interacts with 3B-3; this interaction allows 3B-3 to act as a primer. Removes six residues from its own C-terminus, generating sLb(pro). In terms of processing, specific enzymatic cleavages in vivo by the viral proteases yield a variety of precursors and mature proteins. The polyprotein seems to be cotranslationally cleaved at the 2A/2B junction by a ribosomal skip from one codon to the next without formation of a peptide bond. This process would release the L-P1-2A peptide from the translational complex. Post-translationally, during virion maturation, immature virions are rendered infectious following cleavage of VP0 into VP4 and VP2. This maturation seems to be an autocatalytic event triggered by the presence of RNA in the capsid and is followed by a conformational change of the particle. Myristoylation is required during RNA encapsidation and formation of the mature virus particle. In terms of processing, uridylylated by the polymerase and covalently linked to the 5'-end of genomic RNA. These uridylylated forms act as a nucleotide-peptide primer for the polymerase.

Its subcellular location is the host nucleus. It is found in the host cytoplasm. The protein localises to the virion. The protein resides in the host endoplasmic reticulum membrane. It localises to the host cytoplasmic vesicle membrane. It catalyses the reaction Autocatalytically cleaves itself from the polyprotein of the foot-and-mouth disease virus by hydrolysis of a Lys-|-Gly bond, but then cleaves host cell initiation factor eIF-4G at bonds -Gly-|-Arg- and -Lys-|-Arg-.. The catalysed reaction is a ribonucleoside 5'-triphosphate + H2O = a ribonucleoside 5'-diphosphate + phosphate + H(+). It carries out the reaction RNA(n) + a ribonucleoside 5'-triphosphate = RNA(n+1) + diphosphate. The enzyme catalyses Selective cleavage of Gln-|-Gly bond in the poliovirus polyprotein. In other picornavirus reactions Glu may be substituted for Gln, and Ser or Thr for Gly.. Functionally, autocatalytically cleaves itself from the polyprotein at the L/VP0 junction. Also cleaves the host translation initiation factors EIF4G1 and EIF4G3, in order to shut off the capped cellular mRNA transcription. Plays a role in counteracting host innate antiviral response using diverse mechanisms. Possesses a deubiquitinase activity acting on both 'Lys-48' and 'Lys-63'-linked polyubiquitin chains. In turn, inhibits the ubiquitination and subsequent activation of key signaling molecules of type I IFN response such as host RIGI, TBK1, TRAF3 and TRAF6. Inhibits host NF-kappa-B activity by inducing a decrease in RELA mRNA levels. Cleaves a peptide bond in the C-terminus of host ISG15, resulting in the damaging of this modifier that can no longer be attached to target proteins. Also cleaves host G3BP1 and G3BP2 in order to inhibit cytoplasmic stress granules assembly. In terms of biological role, lies on the inner surface of the capsid shell. After binding to the host receptor, the capsid undergoes conformational changes. Capsid protein VP4 is released, capsid protein VP1 N-terminus is externalized, and together, they shape a pore in the host membrane through which the viral genome is translocated into the host cell cytoplasm. After genome has been released, the channel shrinks. Forms an icosahedral capsid of pseudo T=3 symmetry with capsid proteins VP1 and VP3. The capsid is composed of 60 copies of each capsid protein organized in the form of twelve pentamers and encloses the viral positive strand RNA genome. Upon acidifcation in the endosome, dissociates into pentamers. Its function is as follows. Forms an icosahedral capsid of pseudo T=3 symmetry with capsid proteins VP2 and VP3. The capsid is composed of 60 copies of each capsid protein organized in the form of twelve pentamers and encloses the viral positive strand RNA genome. Mediates cell entry by attachment to an integrin receptor, usually host ITGAV/ITGB6. In addition, targets host MAVS to suppress type I IFN pathway. Upon acidifcation in the endosome, dissociates into pentamers. Functionally, forms an icosahedral capsid of pseudo T=3 symmetry with capsid proteins VP0 and VP3. The capsid is composed of 60 copies of each capsid protein organized in the form of twelve pentamers and encloses the viral positive strand RNA genome. In terms of biological role, mediates self-processing of the polyprotein by a translational effect termed 'ribosome skipping'. Mechanistically, 2A-mediated cleavage occurs between the C-terminal glycine and the proline of the downstream protein 2B. In the case of foot-and-mouth disease virus, the 2A oligopeptide is post-translationally 'trimmed' from the C-terminus of the upstream protein 1D by 3C proteinase. Plays an essential role in the virus replication cycle by acting as a viroporin. Creates a pore in the host endoplasmic reticulum and as a consequence releases Ca2+ in the cytoplasm of infected cell. In turn, high levels of cytoplasmic calcium may trigger membrane trafficking and transport of viral ER-associated proteins to viroplasms, sites of viral genome replication. Its function is as follows. Associates with and induces structural rearrangements of intracellular membranes. Triggers host autophagy by interacting with host BECN1 and thereby promotes viral replication. Participates in viral replication and interacts with host DHX9. Displays RNA-binding, nucleotide binding and NTPase activities. May play a role in virion morphogenesis and viral RNA encapsidation by interacting with the capsid protein VP3. Functionally, plays important roles in virus replication, virulence and host range. Cooperates with host DDX56 to inhibit IRF3 nuclear translocation and subsequent type I interferon production. In terms of biological role, covalently linked to the 5'-end of both the positive-strand and negative-strand genomic RNAs. Acts as a genome-linked replication primer. Covalently linked to the 5'-end0 of both the positive-strand and negative-strand genomic RNAs. Acts as a genome-linked replication primer. Its function is as follows. Cysteine protease that generates mature viral proteins from the precursor polyprotein. In addition to its proteolytic activity, binds to viral RNA and thus influences viral genome replication. RNA and substrate bind cooperatively to the protease. Functionally, RNA-directed RNA polymerase 3D-POL replicates genomic and antigenomic RNA by recognizing replications specific signals. Covalently attaches UMP to a tyrosine of VPg, which is used to prime RNA synthesis. The positive stranded RNA genome is first replicated at virus induced membranous vesicles, creating a dsRNA genomic replication form. This dsRNA is then used as template to synthesize positive stranded RNA genomes. ss(+)RNA genomes are either translated, replicated or encapsidated. The polypeptide is Genome polyprotein (Bos taurus (Bovine)).